Here is a 203-residue protein sequence, read N- to C-terminus: ATP-dependent Clp protease proteolytic subunit 2 (203 aa).

Serine 100 acts as the Nucleophile in catalysis. Residue histidine 125 is part of the active site.

This sequence belongs to the peptidase S14 family. Fourteen ClpP subunits assemble into 2 heptameric rings which stack back to back to give a disk-like structure with a central cavity, resembling the structure of eukaryotic proteasomes.

It is found in the cytoplasm. The catalysed reaction is Hydrolysis of proteins to small peptides in the presence of ATP and magnesium. alpha-casein is the usual test substrate. In the absence of ATP, only oligopeptides shorter than five residues are hydrolyzed (such as succinyl-Leu-Tyr-|-NHMec, and Leu-Tyr-Leu-|-Tyr-Trp, in which cleavage of the -Tyr-|-Leu- and -Tyr-|-Trp bonds also occurs).. Its function is as follows. Cleaves peptides in various proteins in a process that requires ATP hydrolysis. Has a chymotrypsin-like activity. Plays a major role in the degradation of misfolded proteins. The polypeptide is ATP-dependent Clp protease proteolytic subunit 2 (Nocardia farcinica (strain IFM 10152)).